A 267-amino-acid chain; its full sequence is 2-keto-3-deoxy-L-rhamnonate aldolase (267 aa).

His-49 acts as the Proton acceptor in catalysis. Position 151 (Gln-151) interacts with substrate. Glu-153 serves as a coordination point for Mg(2+). Substrate-binding residues include Ala-178 and Asp-179. Asp-179 provides a ligand contact to Mg(2+).

The protein belongs to the HpcH/HpaI aldolase family. KDR aldolase subfamily. In terms of assembly, homohexamer. Requires Mg(2+) as cofactor.

The enzyme catalyses 2-dehydro-3-deoxy-L-rhamnonate = (S)-lactaldehyde + pyruvate. Its function is as follows. Catalyzes the reversible retro-aldol cleavage of 2-keto-3-deoxy-L-rhamnonate (KDR) to pyruvate and lactaldehyde. The sequence is that of 2-keto-3-deoxy-L-rhamnonate aldolase from Salmonella agona (strain SL483).